A 459-amino-acid chain; its full sequence is Vanillin aminotransferase (459 aa).

Pyridoxal 5'-phosphate is bound by residues 115–116 and Asp-255; that span reads GS. N6-(pyridoxal phosphate)lysine is present on Lys-284. 320 to 321 contributes to the pyridoxal 5'-phosphate binding site; it reads FT. Positions 428 to 459 form a coiled coil; sequence LSLEELDELIRIYGKALKDTEKRVEELKSQKK.

This sequence belongs to the class-III pyridoxal-phosphate-dependent aminotransferase family. Expressed in placental tissue of immature fruit.

The catalysed reaction is vanillin + L-alanine = vanillylamine + pyruvate. In terms of biological role, involved in the biosynthesis of capsaicinoids natural products, pungent alkaloids synthesized from phenylpropanoid intermediates in the placental tissue of chili pepper fruit acting as repellant on herbivorous mammals and conferring spiciness to hot peppers. Can transfer an amine from alanine to vanillin, forming vanillylamine and pyruvate. This Capsicum frutescens (Cayenne pepper) protein is Vanillin aminotransferase.